The following is a 132-amino-acid chain: Small ribosomal subunit protein uS8 (132 aa).

Belongs to the universal ribosomal protein uS8 family. As to quaternary structure, part of the 30S ribosomal subunit. Contacts proteins S5 and S12.

One of the primary rRNA binding proteins, it binds directly to 16S rRNA central domain where it helps coordinate assembly of the platform of the 30S subunit. This chain is Small ribosomal subunit protein uS8, found in Ehrlichia chaffeensis (strain ATCC CRL-10679 / Arkansas).